A 348-amino-acid chain; its full sequence is Dihydroorotase (348 aa).

His14 and His16 together coordinate Zn(2+). Substrate-binding positions include 16–18 (HLR) and Asn42. Lys100, His137, and His175 together coordinate Zn(2+). Lys100 is modified (N6-carboxylysine). His137 is a substrate binding site. A substrate-binding site is contributed by Leu220. Asp248 contacts Zn(2+). Residue Asp248 is part of the active site. Positions 252 and 264 each coordinate substrate.

The protein belongs to the metallo-dependent hydrolases superfamily. DHOase family. Class II DHOase subfamily. As to quaternary structure, homodimer. Zn(2+) serves as cofactor.

It carries out the reaction (S)-dihydroorotate + H2O = N-carbamoyl-L-aspartate + H(+). It participates in pyrimidine metabolism; UMP biosynthesis via de novo pathway; (S)-dihydroorotate from bicarbonate: step 3/3. In terms of biological role, catalyzes the reversible cyclization of carbamoyl aspartate to dihydroorotate. In Pseudomonas aeruginosa (strain UCBPP-PA14), this protein is Dihydroorotase.